A 409-amino-acid polypeptide reads, in one-letter code: Nucleoprotein (409 aa).

2 disordered regions span residues 1-64 (MSAG…SNVK) and 167-197 (RNSS…VDDD). The interval 30–161 (GTGQASWFQS…NNYRWDFIAL (132 aa)) is RNA-binding. The CoV N NTD domain maps to 32–157 (GQASWFQSLK…GGPDNNYRWD (126 aa)). Residues 176-197 (ENSRPGSRDSSRGRQRSRVDDD) are compositionally biased toward basic and acidic residues. Position 192 is a phosphoserine; by host (S192). The CoV N CTD domain maps to 217–333 (SKQKANEMAE…ECVDGVGTRP (117 aa)). A dimerization region spans residues 228-335 (KYHKRAIAPG…VDGVGTRPKD (108 aa)). A disulfide bridge links C322 with C325. The interval 327 to 409 (DGVGTRPKDD…GEGAFDDINI (83 aa)) is disordered. Residues 332–349 (RPKDDPTPRSRAASKDRN) are compositionally biased toward basic and acidic residues. At T374 the chain carries Phosphothreonine; by host.

Belongs to the gammacoronavirus nucleocapsid protein family. Homooligomer. Both monomeric and oligomeric forms interact with RNA. Interacts with protein M. Interacts with NSP3; this interaction serves to tether the genome to the newly translated replicase-transcriptase complex at a very early stage of infection. In terms of processing, ADP-ribosylated. The ADP-ribosylation is retained in the virion during infection. Post-translationally, phosphorylated on serine and threonine residues.

Its subcellular location is the virion. The protein localises to the host endoplasmic reticulum-Golgi intermediate compartment. It localises to the host Golgi apparatus. Packages the positive strand viral genome RNA into a helical ribonucleocapsid (RNP) and plays a fundamental role during virion assembly through its interactions with the viral genome and membrane protein M. Plays an important role in enhancing the efficiency of subgenomic viral RNA transcription as well as viral replication. The protein is Nucleoprotein of Gallus gallus (Chicken).